We begin with the raw amino-acid sequence, 153 residues long: Ribonuclease K3 (153 aa).

The first 26 residues, 1–26 (MGPDLRCFPLLLLLLGLWWSVRPLCA), serve as a signal peptide directing secretion. N-linked (GlcNAc...) asparagine glycosylation occurs at asparagine 30. Histidine 41 (proton acceptor) is an active-site residue. 4 disulfide bridges follow: cysteine 49–cysteine 107, cysteine 63–cysteine 117, cysteine 81–cysteine 132, and cysteine 88–cysteine 95. An N-linked (GlcNAc...) asparagine glycan is attached at asparagine 58. Residue 64–68 (KPQNT) participates in substrate binding. N-linked (GlcNAc...) asparagine glycosylation is present at asparagine 85. Lysine 89 is a substrate binding site. The active-site Proton donor is histidine 148.

It belongs to the pancreatic ribonuclease family. In terms of assembly, interacts (via N-terminus) with bacterial lipopolysaccharide (LPS). In terms of tissue distribution, kidney.

It is found in the secreted. The protein localises to the lysosome. It localises to the cytoplasmic granule. Functionally, ribonuclease which shows a preference for the pyrimidines uridine and cytosine. Has potent antibacterial activity against a range of Gram-positive and Gram-negative bacteria, including P.aeruginosa, A.baumanii, M.luteus, S.aureus, E.faecalis, E.faecium, S.saprophyticus and E.coli. Causes loss of bacterial membrane integrity, and also promotes agglutination of Gram-negative bacteria. Probably contributes to urinary tract sterility. Bactericidal activity is independent of RNase activity. The protein is Ribonuclease K3 (RNASE6) of Sus scrofa (Pig).